The chain runs to 54 residues: MKKWECVVCGFIYDEAEGLPDEGIEPGTAWNNVPEDWVCPDCGVGKDDFEMVEI.

Residues 1 to 52 (MKKWECVVCGFIYDEAEGLPDEGIEPGTAWNNVPEDWVCPDCGVGKDDFEMV) form the Rubredoxin-like domain. Positions 6, 9, 39, and 42 each coordinate Fe cation.

The protein belongs to the rubredoxin family. Fe(3+) serves as cofactor.

Its subcellular location is the cytoplasm. It functions in the pathway hydrocarbon metabolism; alkane degradation. Its function is as follows. Involved in the hydrocarbon hydroxylating system, which transfers electrons from NADH to rubredoxin reductase and then through rubredoxin to alkane 1 monooxygenase. In Alcanivorax borkumensis (strain ATCC 700651 / DSM 11573 / NCIMB 13689 / SK2), this protein is Rubredoxin-1 (rubA).